A 333-amino-acid chain; its full sequence is Mitochondrial 2-oxoglutarate/malate carrier protein (333 aa).

Solcar repeat units lie at residues 29–127 (FRLI…LFER), 136–227 (PGFL…SKQF), and 236–325 (DNIL…MNKA). The next 6 helical transmembrane spans lie at 30–61 (RLIALGTCGDSCTHVRQPPKTWMGATVFVQPL), 102–120 (GLSAGLLRQATYTTTRLGI), 138–159 (FLLKALIGMTAGATGAFVGTPA), 202–221 (GCIPTMARAVVVNAAQLASY), 241–259 (HFCASMISGLVTTAASMPV), and 300–319 (GFTPYYARLGPHTVLTFIFL).

Belongs to the mitochondrial carrier (TC 2.A.29) family. As to quaternary structure, interacts with SMIM26.

It localises to the membrane. The catalysed reaction is (S)-malate(in) + 2-oxoglutarate(out) = (S)-malate(out) + 2-oxoglutarate(in). The enzyme catalyses malonate(in) + 2-oxoglutarate(out) = malonate(out) + 2-oxoglutarate(in). It carries out the reaction succinate(in) + 2-oxoglutarate(out) = succinate(out) + 2-oxoglutarate(in). It catalyses the reaction maleate(in) + 2-oxoglutarate(out) = maleate(out) + 2-oxoglutarate(in). The catalysed reaction is oxaloacetate(in) + 2-oxoglutarate(out) = oxaloacetate(out) + 2-oxoglutarate(in). Catalyzes the transport of 2-oxoglutarate (alpha-oxoglutarate) across the inner mitochondrial membrane in an electroneutral exchange for malate. Can also exchange 2-oxoglutarate for other dicarboxylic acids such as malonate, succinate, maleate and oxaloacetate, although with lower affinity. Contributes to several metabolic processes, including the malate-aspartate shuttle, the oxoglutarate/isocitrate shuttle, in gluconeogenesis from lactate, and in nitrogen metabolism. Maintains mitochondrial fusion and fission events, and the organization and morphology of cristae. Involved in the regulation of apoptosis. Helps protect from cytotoxic-induced apoptosis by modulating glutathione levels in mitochondria. This is Mitochondrial 2-oxoglutarate/malate carrier protein (SLC25A11) from Sus scrofa (Pig).